The following is a 181-amino-acid chain: ATP synthase subunit delta (181 aa).

It belongs to the ATPase delta chain family. As to quaternary structure, F-type ATPases have 2 components, F(1) - the catalytic core - and F(0) - the membrane proton channel. F(1) has five subunits: alpha(3), beta(3), gamma(1), delta(1), epsilon(1). F(0) has three main subunits: a(1), b(2) and c(10-14). The alpha and beta chains form an alternating ring which encloses part of the gamma chain. F(1) is attached to F(0) by a central stalk formed by the gamma and epsilon chains, while a peripheral stalk is formed by the delta and b chains.

The protein resides in the cell inner membrane. Functionally, f(1)F(0) ATP synthase produces ATP from ADP in the presence of a proton or sodium gradient. F-type ATPases consist of two structural domains, F(1) containing the extramembraneous catalytic core and F(0) containing the membrane proton channel, linked together by a central stalk and a peripheral stalk. During catalysis, ATP synthesis in the catalytic domain of F(1) is coupled via a rotary mechanism of the central stalk subunits to proton translocation. In terms of biological role, this protein is part of the stalk that links CF(0) to CF(1). It either transmits conformational changes from CF(0) to CF(1) or is implicated in proton conduction. This Chlorobium luteolum (strain DSM 273 / BCRC 81028 / 2530) (Pelodictyon luteolum) protein is ATP synthase subunit delta.